A 270-amino-acid chain; its full sequence is Phosphatidylglycerol--prolipoprotein diacylglyceryl transferase (270 aa).

4 helical membrane-spanning segments follow: residues 19–39 (FPVYWYGIIIGTGVLLGLWLA), 56–76 (LVLIAVPIAILFARMYYVIFE), 92–112 (QGGLAIHGGLIGAVVTGILFA), and 116–136 (GVSFWKLADIAAPSILLGQAI). Arg138 contacts a 1,2-diacyl-sn-glycero-3-phospho-(1'-sn-glycerol). Transmembrane regions (helical) follow at residues 178 to 198 (HPTFLYESLWNFAGVILLLAL), 206 to 226 (GELFFTYLIWYSIGRFFVEGL), and 236 to 256 (LRIAQVMSIGLVVISIIFIIV).

This sequence belongs to the Lgt family.

Its subcellular location is the cell membrane. It carries out the reaction L-cysteinyl-[prolipoprotein] + a 1,2-diacyl-sn-glycero-3-phospho-(1'-sn-glycerol) = an S-1,2-diacyl-sn-glyceryl-L-cysteinyl-[prolipoprotein] + sn-glycerol 1-phosphate + H(+). It functions in the pathway protein modification; lipoprotein biosynthesis (diacylglyceryl transfer). Its function is as follows. Catalyzes the transfer of the diacylglyceryl group from phosphatidylglycerol to the sulfhydryl group of the N-terminal cysteine of a prolipoprotein, the first step in the formation of mature lipoproteins. This Bacillus anthracis (strain A0248) protein is Phosphatidylglycerol--prolipoprotein diacylglyceryl transferase.